We begin with the raw amino-acid sequence, 359 residues long: Protein Wnt-5a (359 aa).

Positions 1 to 20 are cleaved as a signal peptide; sequence MATTHLTAALALLCALLQVD. A disulfide bond links cysteine 83 and cysteine 94. N-linked (GlcNAc...) asparagine glycans are attached at residues asparagine 93 and asparagine 99. Disulfide bonds link cysteine 133–cysteine 141, cysteine 143–cysteine 161, cysteine 217–cysteine 231, cysteine 219–cysteine 226, cysteine 288–cysteine 319, cysteine 304–cysteine 314, cysteine 318–cysteine 358, cysteine 334–cysteine 349, cysteine 336–cysteine 346, and cysteine 341–cysteine 342. Serine 223 is lipidated: O-palmitoleoyl serine; by PORCN. Residues asparagine 291 and asparagine 305 are each glycosylated (N-linked (GlcNAc...) asparagine).

The protein belongs to the Wnt family. In terms of processing, palmitoleoylation is required for efficient binding to frizzled receptors. Depalmitoleoylation leads to Wnt signaling pathway inhibition. Neuroectodermal and non-neuroectodermal tissues.

It is found in the secreted. Its subcellular location is the extracellular space. The protein resides in the extracellular matrix. Functionally, ligand for members of the frizzled family of seven transmembrane receptors. Can activate or inhibit canonical Wnt signaling, depending on receptor context. Required during embryogenesis for extension of the primary anterior-posterior axis. In Ambystoma mexicanum (Axolotl), this protein is Protein Wnt-5a (WNT-5A).